We begin with the raw amino-acid sequence, 444 residues long: C4-dicarboxylate transport protein (444 aa).

Helical transmembrane passes span 18-40 (FYSHLYVQVLVAIAAGILLGHFY), 53-75 (AFIKLVKMIIAPVIFLTVATGIA), 90-112 (AMLYFLTFSTLALIIGLIVANVV), 142-159 (IVGFLTNIIPTTIVGAFA), 163-180 (ILQVLFFSVLFGIALAMV), 201-222 (LVAILMKAAPIGAFGAMAFTIG), 232-254 (LAMLIGTFYITSLLFVFIVLGAV), 327-349 (LFIAQATGIHLSWGDQILLLLVA), and 364-386 (FITLAATLSVVPSVPVAGMALIL).

Belongs to the dicarboxylate/amino acid:cation symporter (DAACS) (TC 2.A.23) family.

It is found in the cell inner membrane. Functionally, responsible for the transport of dicarboxylates such as succinate, fumarate, and malate from the periplasm across the inner membrane. This transport system plays an important role in the energy supply of rhizobium-legume symbionts. In Rhizobium leguminosarum, this protein is C4-dicarboxylate transport protein (dctA).